The primary structure comprises 980 residues: Envelope glycoprotein B (980 aa).

Residues 1 to 14 are compositionally biased toward polar residues; it reads MSSGCRSVGGSTWG. Disordered regions lie at residues 1–20 and 88–118; these read MSSG…RGDG and TTPS…TETP. The first 86 residues, 1-86, serve as a signal peptide directing secretion; sequence MSSGCRSVGG…LFGSCVVRAV (86 aa). Residues 87–849 lie on the Virion surface side of the membrane; the sequence is PTTPSPPTST…SGIASFLNNP (763 aa). The span at 96–118 shows a compositional bias: low complexity; sequence TPTSMSTHSHGTVDPTLLPTETP. Cystine bridges form between cysteine 140–cysteine 647, cysteine 157–cysteine 603, cysteine 231–cysteine 296, cysteine 389–cysteine 437, and cysteine 668–cysteine 708. Residue asparagine 165 is glycosylated (N-linked (GlcNAc...) asparagine; by host). Positions 197–203 are involved in fusion and/or binding to host membrane; sequence VWKGYSH. N-linked (GlcNAc...) asparagine; by host glycosylation is present at asparagine 275. Residues 282–290 are involved in fusion and/or binding to host membrane; it reads GWMPWRHYT. Residues asparagine 380, asparagine 423, asparagine 497, asparagine 514, asparagine 515, and asparagine 560 are each glycosylated (N-linked (GlcNAc...) asparagine; by host). The segment covering 505–516 has biased composition (low complexity); sequence LLNPNANNNNNT. Positions 505–535 are disordered; the sequence is LLNPNANNNNNTTRRRRSLLSVPEPQPTQDG. 2 N-linked (GlcNAc...) asparagine; by host glycosylation sites follow: asparagine 727 and asparagine 749. Hydrophobic membrane proximal region regions lie at residues 794–847 and 823–843; these read IDSV…SFLN and AVGT…SGIA. A helical transmembrane segment spans residues 850 to 870; the sequence is FGGLAIGLLVIAGLVAAFFAY. Over 871–980 the chain is Intravirion; that stretch reads RYVMQIRSNP…NDTMENEKMV (110 aa). The short motif at 925–928 is the Golgi targeting element; that stretch reads YMSM. Residues 965-968 carry the Internalization motif motif; sequence YTRL.

Belongs to the herpesviridae glycoprotein B family. Homotrimer; disulfide-linked. Binds to heparan sulfate proteoglycans. Interacts with gH/gL heterodimer. A proteolytic cleavage by host furin generates two subunits that remain linked by disulfide bonds.

Its subcellular location is the virion membrane. It is found in the host cell membrane. The protein resides in the host endosome membrane. The protein localises to the host Golgi apparatus membrane. Its function is as follows. Envelope glycoprotein that forms spikes at the surface of virion envelope. Essential for the initial attachment to heparan sulfate moieties of the host cell surface proteoglycans. Involved in fusion of viral and cellular membranes leading to virus entry into the host cell. Following initial binding to its host receptors, membrane fusion is mediated by the fusion machinery composed at least of gB and the heterodimer gH/gL. May be involved in the fusion between the virion envelope and the outer nuclear membrane during virion egress. The polypeptide is Envelope glycoprotein B (Equine herpesvirus 1 (strain AB1) (EHV-1)).